A 343-amino-acid chain; its full sequence is Large ribosomal subunit protein uL3 (343 aa).

Disordered regions lie at residues 1-31 (MGHR…TPRS) and 238-262 (KGSR…PGQM).

Belongs to the universal ribosomal protein uL3 family. In terms of assembly, part of the 50S ribosomal subunit. Forms a cluster with proteins L14 and L24e.

One of the primary rRNA binding proteins, it binds directly near the 3'-end of the 23S rRNA, where it nucleates assembly of the 50S subunit. This is Large ribosomal subunit protein uL3 from Sulfurisphaera tokodaii (strain DSM 16993 / JCM 10545 / NBRC 100140 / 7) (Sulfolobus tokodaii).